The following is a 197-amino-acid chain: Pyridoxal 5'-phosphate synthase subunit PdxT (197 aa).

52 to 54 (GES) provides a ligand contact to L-glutamine. Residue Cys-84 is the Nucleophile of the active site. L-glutamine-binding positions include Arg-116 and 143 to 144 (IR). Catalysis depends on charge relay system residues His-179 and Glu-181.

The protein belongs to the glutaminase PdxT/SNO family. In terms of assembly, in the presence of PdxS, forms a dodecamer of heterodimers. Only shows activity in the heterodimer.

The enzyme catalyses aldehydo-D-ribose 5-phosphate + D-glyceraldehyde 3-phosphate + L-glutamine = pyridoxal 5'-phosphate + L-glutamate + phosphate + 3 H2O + H(+). It carries out the reaction L-glutamine + H2O = L-glutamate + NH4(+). The protein operates within cofactor biosynthesis; pyridoxal 5'-phosphate biosynthesis. Catalyzes the hydrolysis of glutamine to glutamate and ammonia as part of the biosynthesis of pyridoxal 5'-phosphate. The resulting ammonia molecule is channeled to the active site of PdxS. The polypeptide is Pyridoxal 5'-phosphate synthase subunit PdxT (Ignicoccus hospitalis (strain KIN4/I / DSM 18386 / JCM 14125)).